Here is a 945-residue protein sequence, read N- to C-terminus: Microtubule cross-linking factor 3 (945 aa).

Low complexity-rich tracts occupy residues 1 to 23, 72 to 93, and 110 to 126; these read MSQPPSGGAAPAATSASAAAAAT, QQQLQQQQQQGNKITGRSTSGT, and PKGAVPGAVQPAPGAEG. Positions 1 to 25 are cleaved as a signal peptide; the sequence is MSQPPSGGAAPAATSASAAAAATEA. 4 disordered regions span residues 1–250, 265–293, 307–366, and 494–522; these read MSQP…SYWK, KERAAAAAAAAQMHTKNGGGGSRSSPVAG, SPMA…TLKN, and LSLKRRGSKDLPKSEKKAQQTPTEDDNED. Residues 141-151 show a composition bias toward basic and acidic residues; sequence GQPEEAPREIE. Over residues 164–179 the composition is skewed to gly residues; sequence GGVGGGGEGGGAGGGP. A compositionally biased stretch (low complexity) spans 219–235; sequence TAATSKTPGPGSRNSGS. A compositionally biased stretch (gly residues) spans 236-247; the sequence is GSTGSGSGGGGS. A compositionally biased stretch (low complexity) spans 328-345; sequence AMQAAAPPSSQPHSQQLQ. Positions 340 to 724 form a coiled coil; sequence HSQQLQEQED…GKVMQLQYEN (385 aa). 2 stretches are compositionally biased toward basic and acidic residues: residues 353 to 366 and 494 to 511; these read EMEKLREENETLKN and LSLKRRGSKDLPKSEKKA. Phosphoserine is present on S567. The segment at 741-811 is disordered; it reads GIRGSPRDSD…PWPKSFSDRQ (71 aa). Basic and acidic residues predominate over residues 745-766; sequence SPRDSDAESDAGKKESDDDSRP. Position 779 is a phosphoserine (S779). Residues 809 to 833 are a coiled coil; sequence DRQQMKDIRSEAERLGKTIDRLIAD. The chain crosses the membrane as a helical span at residues 913-933; the sequence is PIILLILILVLFSSLSYTTIF.

This sequence belongs to the MTCL family.

Its subcellular location is the membrane. The sequence is that of Microtubule cross-linking factor 3 (Mtcl3) from Mus musculus (Mouse).